A 217-amino-acid polypeptide reads, in one-letter code: Large ribosomal subunit protein uL1 (217 aa).

Serine 2 carries the N-acetylserine modification. Tyrosine 11 carries the post-translational modification Phosphotyrosine. Residues lysine 91 and lysine 106 each carry the N6-acetyllysine modification. Lysine 118 bears the N6-acetyllysine; alternate mark. Residue lysine 118 forms a Glycyl lysine isopeptide (Lys-Gly) (interchain with G-Cter in SUMO1); alternate linkage. Lysine 118 is covalently cross-linked (Glycyl lysine isopeptide (Lys-Gly) (interchain with G-Cter in SUMO2); alternate). Lysine 161 is covalently cross-linked (Glycyl lysine isopeptide (Lys-Gly) (interchain with G-Cter in SUMO2)).

Belongs to the universal ribosomal protein uL1 family. In terms of assembly, component of the large ribosomal subunit.

It localises to the cytoplasm. Component of the large ribosomal subunit. The ribosome is a large ribonucleoprotein complex responsible for the synthesis of proteins in the cell. The sequence is that of Large ribosomal subunit protein uL1 (Rpl10a) from Mus musculus (Mouse).